A 108-amino-acid polypeptide reads, in one-letter code: MTLGQQAESLAQGYLEQQGLTFVERNVRYPFGEIDLIMRHKHHWVFVEVKYRSANQFGGAIQALSKAQIGRIRMAASHYLQTHKLDVPCRFDVVAIEDAQIHWLVDAF.

The protein belongs to the UPF0102 family.

This Shewanella sp. (strain MR-4) protein is UPF0102 protein Shewmr4_3685.